A 279-amino-acid chain; its full sequence is Oxygen-dependent coproporphyrinogen-III oxidase (279 aa).

Residue serine 102 coordinates substrate. Histidine 106 and histidine 116 together coordinate a divalent metal cation. Residue histidine 116 is the Proton donor of the active site. 118 to 120 contacts substrate; the sequence is NTR. Positions 149 and 179 each coordinate a divalent metal cation. The interval 244 to 279 is important for dimerization; that stretch reads YVEFNLLYDRGTKFGLMTDGNVEAILMSLPPEVKFN.

The protein belongs to the aerobic coproporphyrinogen-III oxidase family. In terms of assembly, homodimer. It depends on a divalent metal cation as a cofactor.

The protein localises to the cytoplasm. The enzyme catalyses coproporphyrinogen III + O2 + 2 H(+) = protoporphyrinogen IX + 2 CO2 + 2 H2O. Its pathway is porphyrin-containing compound metabolism; protoporphyrin-IX biosynthesis; protoporphyrinogen-IX from coproporphyrinogen-III (O2 route): step 1/1. Involved in the heme biosynthesis. Catalyzes the aerobic oxidative decarboxylation of propionate groups of rings A and B of coproporphyrinogen-III to yield the vinyl groups in protoporphyrinogen-IX. This chain is Oxygen-dependent coproporphyrinogen-III oxidase, found in Rickettsia akari (strain Hartford).